A 227-amino-acid chain; its full sequence is Small ribosomal subunit protein uS3 (227 aa).

One can recognise a KH type-2 domain in the interval V39–R107.

It belongs to the universal ribosomal protein uS3 family. In terms of assembly, part of the 30S ribosomal subunit. Forms a tight complex with proteins S10 and S14.

In terms of biological role, binds the lower part of the 30S subunit head. Binds mRNA in the 70S ribosome, positioning it for translation. This Coxiella burnetii (strain RSA 493 / Nine Mile phase I) protein is Small ribosomal subunit protein uS3 (rpsC).